The sequence spans 278 residues: Tryptophan synthase alpha chain (278 aa).

Active-site proton acceptor residues include glutamate 50 and aspartate 61.

This sequence belongs to the TrpA family. As to quaternary structure, tetramer of two alpha and two beta chains.

The catalysed reaction is (1S,2R)-1-C-(indol-3-yl)glycerol 3-phosphate + L-serine = D-glyceraldehyde 3-phosphate + L-tryptophan + H2O. It participates in amino-acid biosynthesis; L-tryptophan biosynthesis; L-tryptophan from chorismate: step 5/5. Functionally, the alpha subunit is responsible for the aldol cleavage of indoleglycerol phosphate to indole and glyceraldehyde 3-phosphate. In Rhodopseudomonas palustris (strain BisA53), this protein is Tryptophan synthase alpha chain.